Here is a 228-residue protein sequence, read N- to C-terminus: Leucine rich adaptor protein 1-like (228 aa).

Methionine 1 bears the N-acetylmethionine mark. Residues 1–89 (MEDSPLPDLR…GSPRGSHSSA (89 aa)) are disordered. Basic and acidic residues-rich tracts occupy residues 8–21 (DLRD…RKVP) and 28–42 (LRGE…DRDP). Residues 44-56 (GGSGGGGGGGGGC) are compositionally biased toward gly residues. A compositionally biased stretch (low complexity) spans 57-88 (SSSSSYCSFPPSLSSSSSSSPTSGSPRGSHSS).

This Homo sapiens (Human) protein is Leucine rich adaptor protein 1-like (LURAP1L).